The chain runs to 96 residues: Small ribosomal subunit protein bS6 (96 aa).

This sequence belongs to the bacterial ribosomal protein bS6 family.

Functionally, binds together with bS18 to 16S ribosomal RNA. The sequence is that of Small ribosomal subunit protein bS6 from Beutenbergia cavernae (strain ATCC BAA-8 / DSM 12333 / CCUG 43141 / JCM 11478 / NBRC 16432 / NCIMB 13614 / HKI 0122).